The primary structure comprises 507 residues: MKLRVHNTLSGLKEEFFPLSSEVVRMYVCGPTVYDVPHIGNIRASVVYDIVYRVLLKLFPEVIYVRNITDVDDKIITAASVRGVKCDKVALHYEHIFHEHLGLLNCLSPTVEPKATQNIGKMISMIQALIDNGNAYSVGGNVYFDVGSFAEYGVLSKRKKEQLVYGVRVEKDVDKKHPGDFILWKSDDHVYWPSPWGNGRPGWHIECSAMTLATLGADFDIHGGGADLKFPHHENERAQSMCANPGSQFARYWVHNGFLTVNGEKMSKSLGNVVNVDTLVESGVTPNVIRFVLISTHYSKPLDWNDAMVGEAINSLIKFKLALLDSGVLPKSKSHIGSLNIGVCSDNAEDEEVDPRSCASEVIVARNKRKAKNFSKKMNEIFNKFGGLGDDCSIYTREFFECMADDFNTPGAIAVLHKLSDGVRLVGAEKVNNLAHLLYNLLIFLGIDLGVRQSSVSEDFIRSQLQKRADCKRQKDFVEADRIRFALAKMGVLIRDHKHAPTDWVSL.

Cysteine 29 contacts Zn(2+). A 'HIGH' region motif is present at residues 31-41; it reads PTVYDVPHIGN. Zn(2+) contacts are provided by cysteine 207, histidine 232, and glutamate 236. Residues 265–269 carry the 'KMSKS' region motif; that stretch reads KMSKS. Lysine 268 provides a ligand contact to ATP.

It belongs to the class-I aminoacyl-tRNA synthetase family. Monomer. The cofactor is Zn(2+).

The protein resides in the cytoplasm. It catalyses the reaction tRNA(Cys) + L-cysteine + ATP = L-cysteinyl-tRNA(Cys) + AMP + diphosphate. The protein is Cysteine--tRNA ligase of Neorickettsia sennetsu (strain ATCC VR-367 / Miyayama) (Ehrlichia sennetsu).